We begin with the raw amino-acid sequence, 614 residues long: Nuclear receptor subfamily 1 group D member 1 (614 aa).

Residues 1-12 show a composition bias toward polar residues; the sequence is MTTLDSNNNTGG. The segment at 1–70 is required for phosphorylation by CSNK1E and cytoplasmic localization; sequence MTTLDSNNNT…TQDPARSFGS (70 aa). Residues 1-119 form a disordered region; it reads MTTLDSNNNT…SSRVSPSKST (119 aa). Residues 1–128 form a modulating region; it reads MTTLDSNNNT…TSNITKLNGM (128 aa). Over residues 14–34 the composition is skewed to low complexity; the sequence is ITYIGSSGSSPSRTSPESLYS. Positions 35-48 are enriched in polar residues; sequence DNSNGSFQSLTQGC. The crucial for activation of GJA1 stretch occupies residues 49–284; the sequence is PTYFPPSPTG…PPRSPSPEPT (236 aa). Phosphoserine; by GSK3-beta occurs at positions 55 and 59. The span at 69-102 shows a compositional bias: low complexity; the sequence is GSIPPSLSDDGSPSSSSSSSSSSSSFYNGSPPGS. The nuclear receptor DNA-binding region spans 129 to 205; sequence VLLCKVCGDV…VGMSRDAVRF (77 aa). 2 NR C4-type zinc fingers span residues 132–152 and 169–193; these read CKVC…CEGC and CLKN…FKKC. 2 positions are modified to N6-acetyllysine; by KAT5: lysine 191 and lysine 192. Residues 233–243 are compositionally biased toward polar residues; the sequence is SQCPLETSPTQ. Disordered regions lie at residues 233-285 and 311-345; these read SQCP…EPTV and PGNF…DNNT. Over residues 244 to 261 the composition is skewed to pro residues; that stretch reads HPTPGPMGPSPPPAPVPS. Position 274 is a phosphothreonine; by CDK1 (threonine 274). In terms of domain architecture, NR LBD spans 284-614; it reads TVEDVISQVA…KLLSFRVDAQ (331 aa). Residues 311–324 are compositionally biased toward polar residues; sequence PGNFNANHASGSPP. Lysine 400 bears the N6-acetyllysine mark. Cysteine 418 contributes to the heme binding site. Lysine 591 is modified (N6-acetyllysine). Residue histidine 602 coordinates heme.

It belongs to the nuclear hormone receptor family. NR1 subfamily. As to quaternary structure, binds DNA as a monomer or a homodimer. Interacts with C1D, NR2E3 and SP1. Interacts with OPHN1 (via C-terminus). Interacts with ZNHIT1. Interacts with PER2; the interaction associates PER2 to BMAL1 promoter region. Interacts with CRY1. Interacts with CCAR2. Interacts with SIAH2. Interacts with CDK1. Interacts with FBXW7. Interacts with HUWE1. Interacts with NR0B2. Interacts with NFIL3. Interacts (via domain NR LBD) with HSP90AA1 and HSP90AB1. Post-translationally, ubiquitinated, leading to its proteasomal degradation. Ubiquitinated by SIAH2; leading to its proteasomal degradation. Ubiquitinated by the SCF(FBXW7) complex when phosphorylated by CDK1 leading to its proteasomal degradation. Rapidly ubiquitinated in response to inflammatory triggers and sumoylation is a prerequisite to its ubiquitination. In terms of processing, sumoylated by UBE2I, desumoylated by SENP1, and sumoylation is a prerequisite to its ubiquitination. Phosphorylated by CSNK1E; phosphorylation enhances its cytoplasmic localization. Post-translationally, undergoes lysosome-mediated degradation in a time-dependent manner in the liver. As to expression, widely expressed. Expressed at high levels in the liver, adipose tissue, skeletal muscle and brain. Also expressed in endothelial cells (ECs), vascular smooth muscle cells (VSMCs) and macrophages. Expression oscillates diurnally in the suprachiasmatic nucleus (SCN) of the hypothalamus as well as in peripheral tissues. Expression increases during the differentiation of pre-adipocytes into mature adipocytes. Expressed at high levels in some squamous carcinoma cell lines.

It localises to the nucleus. The protein resides in the cytoplasm. Its subcellular location is the cell projection. The protein localises to the dendrite. It is found in the dendritic spine. Functionally, transcriptional repressor which coordinates circadian rhythm and metabolic pathways in a heme-dependent manner. Integral component of the complex transcription machinery that governs circadian rhythmicity and forms a critical negative limb of the circadian clock by directly repressing the expression of core clock components BMAL1, CLOCK and CRY1. Also regulates genes involved in metabolic functions, including lipid and bile acid metabolism, adipogenesis, gluconeogenesis and the macrophage inflammatory response. Acts as a receptor for heme which stimulates its interaction with the NCOR1/HDAC3 corepressor complex, enhancing transcriptional repression. Recognizes two classes of DNA response elements within the promoter of its target genes and can bind to DNA as either monomers or homodimers, depending on the nature of the response element. Binds as a monomer to a response element composed of the consensus half-site motif 5'-[A/G]GGTCA-3' preceded by an A/T-rich 5' sequence (RevRE), or as a homodimer to a direct repeat of the core motif spaced by two nucleotides (RevDR-2). Acts as a potent competitive repressor of ROR alpha (RORA) function and regulates the levels of its ligand heme by repressing the expression of PPARGC1A, a potent inducer of heme synthesis. Regulates lipid metabolism by repressing the expression of APOC3 and by influencing the activity of sterol response element binding proteins (SREBPs); represses INSIG2 which interferes with the proteolytic activation of SREBPs which in turn govern the rhythmic expression of enzymes with key functions in sterol and fatty acid synthesis. Regulates gluconeogenesis via repression of G6PC1 and PEPCK and adipocyte differentiation via repression of PPARG. Regulates glucagon release in pancreatic alpha-cells via the AMPK-NAMPT-SIRT1 pathway and the proliferation, glucose-induced insulin secretion and expression of key lipogenic genes in pancreatic-beta cells. Positively regulates bile acid synthesis by increasing hepatic expression of CYP7A1 via repression of NR0B2 and NFIL3 which are negative regulators of CYP7A1. Modulates skeletal muscle oxidative capacity by regulating mitochondrial biogenesis and autophagy; controls mitochondrial biogenesis and respiration by interfering with the STK11-PRKAA1/2-SIRT1-PPARGC1A signaling pathway. Represses the expression of SERPINE1/PAI1, an important modulator of cardiovascular disease and the expression of inflammatory cytokines and chemokines in macrophages. Represses gene expression at a distance in macrophages by inhibiting the transcription of enhancer-derived RNAs (eRNAs). Plays a role in the circadian regulation of body temperature and negatively regulates thermogenic transcriptional programs in brown adipose tissue (BAT); imposes a circadian oscillation in BAT activity, increasing body temperature when awake and depressing thermogenesis during sleep. In concert with NR2E3, regulates transcriptional networks critical for photoreceptor development and function. In addition to its activity as a repressor, can also act as a transcriptional activator. In the ovarian granulosa cells acts as a transcriptional activator of STAR which plays a role in steroid biosynthesis. In collaboration with SP1, activates GJA1 transcription in a heme-independent manner. Represses the transcription of CYP2B10, CYP4A10 and CYP4A14. Represses the transcription of CES2. Represses and regulates the circadian expression of TSHB in a NCOR1-dependent manner. Negatively regulates the protein stability of NR3C1 and influences the time-dependent subcellular distribution of NR3C1, thereby affecting its transcriptional regulatory activity. Plays a critical role in the circadian control of neutrophilic inflammation in the lung; under resting, non-stress conditions, acts as a rhythmic repressor to limit inflammatory activity whereas in the presence of inflammatory triggers undergoes ubiquitin-mediated degradation thereby relieving inhibition of the inflammatory response. Plays a key role in the circadian regulation of microglial activation and neuroinflammation; suppresses microglial activation through the NF-kappaB pathway in the central nervous system. Plays a role in the regulation of the diurnal rhythms of lipid and protein metabolism in the skeletal muscle via transcriptional repression of genes controlling lipid and amino acid metabolism in the muscle. In Homo sapiens (Human), this protein is Nuclear receptor subfamily 1 group D member 1 (NR1D1).